Reading from the N-terminus, the 354-residue chain is Sulfate/thiosulfate import ATP-binding protein CysA (354 aa).

An ABC transporter domain is found at 3–237 (IEVRGLSKRF…PATPFVYGFL (235 aa)). 35–42 (GPSGCGKT) contributes to the ATP binding site.

This sequence belongs to the ABC transporter superfamily. Sulfate/tungstate importer (TC 3.A.1.6) family. The complex is composed of two ATP-binding proteins (CysA), two transmembrane proteins (CysT and CysW) and a solute-binding protein (CysP).

Its subcellular location is the cell inner membrane. It catalyses the reaction sulfate(out) + ATP + H2O = sulfate(in) + ADP + phosphate + H(+). The catalysed reaction is thiosulfate(out) + ATP + H2O = thiosulfate(in) + ADP + phosphate + H(+). Its function is as follows. Part of the ABC transporter complex CysAWTP involved in sulfate/thiosulfate import. Responsible for energy coupling to the transport system. The protein is Sulfate/thiosulfate import ATP-binding protein CysA of Bordetella bronchiseptica (strain ATCC BAA-588 / NCTC 13252 / RB50) (Alcaligenes bronchisepticus).